The chain runs to 457 residues: MEGLVTLILAAGLGKRMKSKHPKVVHKVCGKPMIEWVVDAVEEIGSKEVIVVVGHKAEEVKEVLKERVKYAYQEVQLGTGHAVMMAEDLLPEEGNVLILTGDTPLITSNTLKELINFHIKEGNSVTILSSVLEDPTGYGRIIRDKSGNVIRIVEDKDATEEEKSIHEINSAMYVMDIAKLKKALRMITNNNAQGEYYLTDAVEIIRDMDGKIGAFTVPSEEITGVNSRVQLFEAEKIMRKRINYRHMENGVTIVDPDTTYIGAEVEIGADTVVLPGCVIEGKTKIGSDCEIGPNCRIVDSEIGDGCSVTYSVILSSKIKNNVKIGPFAHIRPETVIQSNVKIGDFVEIKKSIIDEGSKVPHLTYVGDAEVGKNVNMGCGSITVNYDGKQKHKTVIGDNVFVGCNVNLVAPVKIGNNAYIAAGSTITEDVPEGALAIARSRQTNKEGWVQERIKKGRL.

Residues 1–228 form a pyrophosphorylase region; the sequence is MEGLVTLILA…SEEITGVNSR (228 aa). Residues 9–12, lysine 23, glutamine 73, and 78–79 contribute to the UDP-N-acetyl-alpha-D-glucosamine site; these read LAAG and GT. Aspartate 102 contributes to the Mg(2+) binding site. 4 residues coordinate UDP-N-acetyl-alpha-D-glucosamine: glycine 139, glutamate 154, asparagine 169, and asparagine 226. Mg(2+) is bound at residue asparagine 226. The tract at residues 229–249 is linker; that stretch reads VQLFEAEKIMRKRINYRHMEN. Positions 250 to 457 are N-acetyltransferase; it reads GVTIVDPDTT…VQERIKKGRL (208 aa). 2 residues coordinate UDP-N-acetyl-alpha-D-glucosamine: arginine 331 and lysine 349. The active-site Proton acceptor is histidine 361. Positions 364 and 375 each coordinate UDP-N-acetyl-alpha-D-glucosamine. Acetyl-CoA contacts are provided by residues 384 to 385, alanine 421, and arginine 438; that span reads NY.

This sequence in the N-terminal section; belongs to the N-acetylglucosamine-1-phosphate uridyltransferase family. In the C-terminal section; belongs to the transferase hexapeptide repeat family. Homotrimer. The cofactor is Mg(2+).

The protein localises to the cytoplasm. It catalyses the reaction alpha-D-glucosamine 1-phosphate + acetyl-CoA = N-acetyl-alpha-D-glucosamine 1-phosphate + CoA + H(+). The enzyme catalyses N-acetyl-alpha-D-glucosamine 1-phosphate + UTP + H(+) = UDP-N-acetyl-alpha-D-glucosamine + diphosphate. It functions in the pathway nucleotide-sugar biosynthesis; UDP-N-acetyl-alpha-D-glucosamine biosynthesis; N-acetyl-alpha-D-glucosamine 1-phosphate from alpha-D-glucosamine 6-phosphate (route II): step 2/2. The protein operates within nucleotide-sugar biosynthesis; UDP-N-acetyl-alpha-D-glucosamine biosynthesis; UDP-N-acetyl-alpha-D-glucosamine from N-acetyl-alpha-D-glucosamine 1-phosphate: step 1/1. It participates in bacterial outer membrane biogenesis; LPS lipid A biosynthesis. In terms of biological role, catalyzes the last two sequential reactions in the de novo biosynthetic pathway for UDP-N-acetylglucosamine (UDP-GlcNAc). The C-terminal domain catalyzes the transfer of acetyl group from acetyl coenzyme A to glucosamine-1-phosphate (GlcN-1-P) to produce N-acetylglucosamine-1-phosphate (GlcNAc-1-P), which is converted into UDP-GlcNAc by the transfer of uridine 5-monophosphate (from uridine 5-triphosphate), a reaction catalyzed by the N-terminal domain. The polypeptide is Bifunctional protein GlmU (Thermoanaerobacter pseudethanolicus (strain ATCC 33223 / 39E) (Clostridium thermohydrosulfuricum)).